Reading from the N-terminus, the 445-residue chain is Squalene synthase (445 aa).

The next 2 membrane-spanning stretches (helical) occupy residues 291–311 (STFT…DLVY) and 405–425 (LIVC…IAYV).

This sequence belongs to the phytoene/squalene synthase family. Mg(2+) serves as cofactor.

It is found in the endoplasmic reticulum membrane. The catalysed reaction is 2 (2E,6E)-farnesyl diphosphate + NADPH + H(+) = squalene + 2 diphosphate + NADP(+). It carries out the reaction 2 (2E,6E)-farnesyl diphosphate + NADH + H(+) = squalene + 2 diphosphate + NAD(+). Its pathway is terpene metabolism; lanosterol biosynthesis; lanosterol from farnesyl diphosphate: step 1/3. Its function is as follows. Catalyzes the condensation of 2 two farnesyl pyrophosphate moieties to form squalene. It is the first committed enzyme of the sterol biosynthesis pathway. Required for the biosynthesis of ergosterol. The chain is Squalene synthase (SQS1) from Yarrowia lipolytica (strain CLIB 122 / E 150) (Yeast).